The primary structure comprises 122 residues: Seminal vesicle secretory protein 5 (122 aa).

Residues 1-21 (MSPTSFFLLTLLLVLVTEARG) form the signal peptide. A disordered region spans residues 23-122 (RERFSQSAED…KTRVKSRILK (100 aa)). Residues 27 to 37 (SQSAEDPSSSH) are compositionally biased toward polar residues.

It belongs to the SVP2/SVP5/SVP6 family. Testis.

It localises to the secreted. It is found in the extracellular space. The protein is Seminal vesicle secretory protein 5 (Svs5) of Mus musculus (Mouse).